A 966-amino-acid polypeptide reads, in one-letter code: Next to BRCA1 gene 1 protein (966 aa).

A PB1 domain is found at 4-85 (QVTLNVTFKN…NQLQMQVHEG (82 aa)). Serine 116 carries the post-translational modification Phosphoserine. Residues 212–264 (SWHIACNNCQRRIVGVRYQCSLCPSYNICEDCEAGPYGHDTNHVLLKLRRPVV) form a ZZ-type zinc finger. The Zn(2+) site is built by cysteine 217, cysteine 220, cysteine 231, cysteine 234, cysteine 240, cysteine 243, histidine 250, and histidine 254. Positions 542-636 (ASERELYIPS…KRKAENIASV (95 aa)) are ATG8 family protein-binding. Residue threonine 586 is modified to Phosphothreonine; by GSK3-alpha. Phosphoserine is present on residues serine 590, serine 596, and serine 625. Positions 699–718 (EAVMEEEEDEEDEEEEDELK) are enriched in acidic residues. Disordered regions lie at residues 699-728 (EAVM…SSAS), 750-792 (MYSS…QPQE), and 848-879 (VPDQ…HHGS). Residues 727-738 (ASSEDYIIILPE) are ATG8 family protein-binding. One can recognise a UBA domain in the interval 913–957 (SEDQTAALMAHLFEMGFCDRQLNLRLLKKHNYNILQVVTELLQLN).

In terms of assembly, homooligomer and heterooligomer. Interacts with TRIM55. Interacts with titin/TTN. Interacts with RNF29, USP8, MAP1LC3A, MAP1LC3B, MAP1LC3C, GABARAP, GABARAPL1 and GABARAPL2. Binds to ubiquitin and ubiquitinated proteins. Interacts with SQSTM1. Interacts with TAX1BP1. Interacts with IRF3; this interaction mediates autophagic degradation of IRF3. Interacts with IL12A and IL12B. (Microbial infection) Interacts with Influenza A virus protein PB1; this interaction promotes NBR1-mediated selective autophagic degradation of MAVS. In terms of processing, (Microbial infection) Cleaved by S.pyogenes SpeB protease; leading to its degradation. Degradation by SpeB prevents autophagy, promoting to S.pyogenes intracellular replication. Phosphorylated by GSK3A; this phosphorylation inhibits NBR1 involvement in the formation of ubiquitinated protein aggregates.

It localises to the cytoplasm. Its subcellular location is the cytoplasmic vesicle. The protein resides in the autophagosome. It is found in the lysosome. The protein localises to the myofibril. It localises to the sarcomere. Its subcellular location is the m line. Its function is as follows. Ubiquitin-binding autophagy adapter that participates in different processes including host defense or intracellular homeostasis. Possesses a double function during the selective autophagy by acting as a shuttle bringing ubiquitinated proteins to autophagosomes and also by participating in the formation of protein aggregates. Plays a role in the regulation of the innate immune response by modulating type I interferon production and targeting ubiquitinated IRF3 for autophagic degradation. In response to oxidative stress, promotes an increase in SQSTM1 levels, phosphorylation, and body formation by preventing its autophagic degradation. In turn, activates the KEAP1-NRF2/NFE2L2 antioxidant pathway. Also plays non-autophagy role by mediating the shuttle of IL-12 to late endosome for subsequent secretion. The polypeptide is Next to BRCA1 gene 1 protein (NBR1) (Homo sapiens (Human)).